An 83-amino-acid polypeptide reads, in one-letter code: Evasin P1124 (83 aa).

Positions 1 to 28 (MAVNVFTILQLAVFAAIVLNVNLHSVSA) are cleaved as a signal peptide. Cystine bridges form between Cys-48–Cys-66, Cys-52–Cys-68, and Cys-62–Cys-79. N-linked (GlcNAc...) asparagine glycosylation is present at Asn-51.

It localises to the secreted. In terms of biological role, salivary chemokine-binding protein which binds to host chemokines CXCL1, CXCL2, CXCL3, CXCL5, CXCL6, CXCL12 and CXCL13. The sequence is that of Evasin P1124 from Ixodes ricinus (Common tick).